A 367-amino-acid chain; its full sequence is MQTLKVELGERSYPIHIGEGLLDQPELLAPHIVGRQVAIVSNTTVAPLYLERLTQTLAGYNVLPIVLPDGEAFKNWETLQTIFDGLLTARHDRRTTVIALGGGVIGDMAGFAAACYQRGVNFIQIPTTLLSQVDSSVGGKTGINHPLGKNMVGAFYQPSVVLIDTTSLNTLPERELSAGLAEVIKYGLICDEPFLTWLEEHVDALRGLDQAALTVAIERSCAAKALVVGADERESGVRATLNLGHTFGHAIETHMGYGVWLHGEAVAAGTVMALEMSSRLGWISTQERDRGIRLFQRAGLPVVPPQEMTEDNFLEHMAIDKKVIDGRLRLVLLRQIGEAVITDDYPQEVLQATLVADYRALVDQLRG.

Residues 69–74 (DGEAFK), 103–107 (GVIGD), 127–128 (TT), Lys-140, and Lys-149 each bind NAD(+). Zn(2+)-binding residues include Glu-182, His-245, and His-262.

It belongs to the sugar phosphate cyclases superfamily. Dehydroquinate synthase family. It depends on NAD(+) as a cofactor. Co(2+) is required as a cofactor. Zn(2+) serves as cofactor.

The protein localises to the cytoplasm. It catalyses the reaction 7-phospho-2-dehydro-3-deoxy-D-arabino-heptonate = 3-dehydroquinate + phosphate. It functions in the pathway metabolic intermediate biosynthesis; chorismate biosynthesis; chorismate from D-erythrose 4-phosphate and phosphoenolpyruvate: step 2/7. Functionally, catalyzes the conversion of 3-deoxy-D-arabino-heptulosonate 7-phosphate (DAHP) to dehydroquinate (DHQ). The polypeptide is 3-dehydroquinate synthase (Pseudomonas syringae pv. tomato (strain ATCC BAA-871 / DC3000)).